The sequence spans 147 residues: Hemoglobin subunit beta (147 aa).

A Globin domain is found at 2 to 147 (ELTEAQRGAI…VVSALGKQYH (146 aa)). Heme b is bound by residues His-63 and His-92.

It belongs to the globin family. Heterotetramer of two alpha chains and two beta chains. In terms of tissue distribution, red blood cells.

Functionally, involved in oxygen transport from gills to the various peripheral tissues. This Electrophorus electricus (Electric eel) protein is Hemoglobin subunit beta (hbb).